The primary structure comprises 233 residues: Transcriptional regulatory protein PrrA (233 aa).

Residues 9–123 form the Response regulatory domain; sequence RVLVVDDDSD…ELVARVKALL (115 aa). Aspartate 58 carries the post-translational modification 4-aspartylphosphate. The segment at residues 134 to 232 is a DNA-binding region (ompR/PhoB-type); it reads SETIAVGPLE…VRGVGFVLRM (99 aa).

Post-translationally, phosphorylated by PrrB at Asp-58.

It localises to the cytoplasm. Functionally, member of the two-component regulatory system PrrB/PrrA that is involved specifically in early intracellular multiplication of Mycobacterium and is essential for its viability. Upon phosphorylation by PrrB, functions as a transcription regulator by direct binding to promoter regions of target genes to positively regulate their expression. Autoregulates its own expression. The polypeptide is Transcriptional regulatory protein PrrA (prrA) (Mycobacterium leprae (strain TN)).